Reading from the N-terminus, the 511-residue chain is 2,3-bisphosphoglycerate-independent phosphoglycerate mutase (511 aa).

2 residues coordinate Mn(2+): Asp-12 and Ser-62. The active-site Phosphoserine intermediate is the Ser-62. Substrate-binding positions include His-123, 153 to 154, Arg-185, Arg-191, 260 to 263, and Lys-333; these read RD and RPDR. Asp-400, His-404, Asp-441, His-442, and His-460 together coordinate Mn(2+).

It belongs to the BPG-independent phosphoglycerate mutase family. Monomer. Requires Mn(2+) as cofactor.

It carries out the reaction (2R)-2-phosphoglycerate = (2R)-3-phosphoglycerate. Its pathway is carbohydrate degradation; glycolysis; pyruvate from D-glyceraldehyde 3-phosphate: step 3/5. Its function is as follows. Catalyzes the interconversion of 2-phosphoglycerate and 3-phosphoglycerate. The protein is 2,3-bisphosphoglycerate-independent phosphoglycerate mutase of Clostridium novyi (strain NT).